The sequence spans 172 residues: Type IV secretion system putative outer membrane lipoprotein BMEII0036 (172 aa).

Positions 1-15 (MRTLVMVACAVSLAA) are cleaved as a signal peptide. Residue C16 is the site of N-palmitoyl cysteine attachment. Residue C16 is the site of S-diacylglycerol cysteine attachment. An OmpA-like domain is found at 58–172 (WPARPPKQTV…RRVDIEILRK (115 aa)).

It localises to the cell outer membrane. The protein is Type IV secretion system putative outer membrane lipoprotein BMEII0036 of Brucella melitensis biotype 1 (strain ATCC 23456 / CCUG 17765 / NCTC 10094 / 16M).